We begin with the raw amino-acid sequence, 1001 residues long: Translation initiation factor IF-2 (1001 aa).

The interval 34-404 (KSHSSTISES…SRGDRRDRKE (371 aa)) is disordered. A compositionally biased stretch (basic and acidic residues) spans 67-80 (SRPESKEDKSDPKQ). 3 stretches are compositionally biased toward pro residues: residues 98 to 107 (PARPTPPPRP), 147 to 157 (PTQPLAPPPVP), and 163 to 172 (PSKPAPPTPP). Positions 173 to 190 (AKKAAPAPRLAGPPGRTA) are enriched in low complexity. Composition is skewed to basic and acidic residues over residues 212–230 (SLKDNRGQARSPGDREEKV) and 238–252 (PKPKVELRRPKPPRP). Over residues 332–342 (DDDDDDLDIDG) the composition is skewed to acidic residues. Low complexity-rich tracts occupy residues 362 to 371 (KSLAAKPSTP) and 385 to 394 (AGSSAGGSSR). Residues 395 to 404 (SRGDRRDRKE) show a composition bias toward basic and acidic residues. The tr-type G domain maps to 493–666 (RRPPVVTIMG…LLVSEVEELV (174 aa)). Positions 502–509 (GHVDHGKT) are G1. Position 502–509 (502–509 (GHVDHGKT)) interacts with GTP. The interval 527 to 531 (GITQH) is G2. Positions 552–555 (DTPG) are G3. Residues 552 to 556 (DTPGH) and 606 to 609 (NKVD) each bind GTP. The interval 606–609 (NKVD) is G4. Positions 642–644 (SAL) are G5.

This sequence belongs to the TRAFAC class translation factor GTPase superfamily. Classic translation factor GTPase family. IF-2 subfamily.

Its subcellular location is the cytoplasm. One of the essential components for the initiation of protein synthesis. Protects formylmethionyl-tRNA from spontaneous hydrolysis and promotes its binding to the 30S ribosomal subunits. Also involved in the hydrolysis of GTP during the formation of the 70S ribosomal complex. The protein is Translation initiation factor IF-2 (infB) of Synechocystis sp. (strain ATCC 27184 / PCC 6803 / Kazusa).